The chain runs to 165 residues: MSLNQLKAPRGANRAKKRVGRGQGSGLGKTAGRGGKGQKARSGNMHFEGFEGGQMPLQRRLPKFGFHNIFRRELEEVKVGDLQGLSGVVDPAALKSAGLVRGNRDGVVVLAGGELSSALTVKVHRVTAGARAAIEKAGGKVELIPAPQTMHQKAKAAKKAAAQAK.

A disordered region spans residues 1–44 (MSLNQLKAPRGANRAKKRVGRGQGSGLGKTAGRGGKGQKARSGN). Gly residues predominate over residues 21 to 37 (RGQGSGLGKTAGRGGKG).

It belongs to the universal ribosomal protein uL15 family. As to quaternary structure, part of the 50S ribosomal subunit.

Functionally, binds to the 23S rRNA. The polypeptide is Large ribosomal subunit protein uL15 (Anaeromyxobacter dehalogenans (strain 2CP-C)).